We begin with the raw amino-acid sequence, 466 residues long: Ribulose bisphosphate carboxylase large chain (466 aa).

Lysine 5 carries the post-translational modification N6,N6,N6-trimethyllysine. Asparagine 114 and threonine 164 together coordinate substrate. The Proton acceptor role is filled by lysine 166. Position 168 (lysine 168) interacts with substrate. Mg(2+) contacts are provided by lysine 192, aspartate 194, and glutamate 195. N6-carboxylysine is present on lysine 192. The Proton acceptor role is filled by histidine 285. Residues arginine 286, histidine 318, and serine 370 each coordinate substrate.

The protein belongs to the RuBisCO large chain family. Type I subfamily. As to quaternary structure, heterohexadecamer of 8 large chains and 8 small chains; disulfide-linked. The disulfide link is formed within the large subunit homodimers. It depends on Mg(2+) as a cofactor. Post-translationally, the disulfide bond which can form in the large chain dimeric partners within the hexadecamer appears to be associated with oxidative stress and protein turnover.

It localises to the plastid. The protein resides in the chloroplast. It catalyses the reaction 2 (2R)-3-phosphoglycerate + 2 H(+) = D-ribulose 1,5-bisphosphate + CO2 + H2O. The enzyme catalyses D-ribulose 1,5-bisphosphate + O2 = 2-phosphoglycolate + (2R)-3-phosphoglycerate + 2 H(+). Its function is as follows. RuBisCO catalyzes two reactions: the carboxylation of D-ribulose 1,5-bisphosphate, the primary event in carbon dioxide fixation, as well as the oxidative fragmentation of the pentose substrate in the photorespiration process. Both reactions occur simultaneously and in competition at the same active site. The sequence is that of Ribulose bisphosphate carboxylase large chain from Drosera peltata (Pale sundew).